The sequence spans 753 residues: 5-methyltetrahydropteroyltriglutamate--homocysteine methyltransferase (753 aa).

Residues 17-20 and lysine 117 each bind 5-methyltetrahydropteroyltri-L-glutamate; that span reads RELK. L-homocysteine-binding positions include 431 to 433 and glutamate 484; that span reads IGS. Residues 431–433 and glutamate 484 contribute to the L-methionine site; that span reads IGS. 5-methyltetrahydropteroyltri-L-glutamate is bound by residues 515–516 and tryptophan 561; that span reads RC. Aspartate 599 contributes to the L-homocysteine binding site. Aspartate 599 contacts L-methionine. Glutamate 605 contacts 5-methyltetrahydropteroyltri-L-glutamate. The Zn(2+) site is built by histidine 641, cysteine 643, and glutamate 665. Catalysis depends on histidine 694, which acts as the Proton donor. Cysteine 726 lines the Zn(2+) pocket.

It belongs to the vitamin-B12 independent methionine synthase family. Requires Zn(2+) as cofactor.

It catalyses the reaction 5-methyltetrahydropteroyltri-L-glutamate + L-homocysteine = tetrahydropteroyltri-L-glutamate + L-methionine. Its pathway is amino-acid biosynthesis; L-methionine biosynthesis via de novo pathway; L-methionine from L-homocysteine (MetE route): step 1/1. Its function is as follows. Catalyzes the transfer of a methyl group from 5-methyltetrahydrofolate to homocysteine resulting in methionine formation. The chain is 5-methyltetrahydropteroyltriglutamate--homocysteine methyltransferase from Shigella boydii serotype 18 (strain CDC 3083-94 / BS512).